Consider the following 642-residue polypeptide: Pentatricopeptide repeat-containing protein At3g16010 (642 aa).

PPR repeat units lie at residues 125 to 159, 161 to 195, 196 to 230, 232 to 266, 267 to 301, 302 to 336, 337 to 371, 372 to 407, 408 to 442, 443 to 473, 478 to 512, 513 to 547, 548 to 582, and 583 to 617; these read DCST…TYVS, SPAV…KCKP, TSST…GDCF, DTIT…CMQP, TEKI…GCSP, TVYT…GLTP, DVVF…RCTP, TVVS…SVSP, SEFT…GFPP, CPAA…LKEN, SSRV…GSGP, DVYA…GCRA, DINS…GIKP, and DGVT…GFEY.

Belongs to the PPR family. P subfamily.

The sequence is that of Pentatricopeptide repeat-containing protein At3g16010 from Arabidopsis thaliana (Mouse-ear cress).